We begin with the raw amino-acid sequence, 525 residues long: GMP synthase [glutamine-hydrolyzing] (525 aa).

A Glutamine amidotransferase type-1 domain is found at 9 to 207 (RILILDFGSQ…VRDICQCEAL (199 aa)). Cysteine 86 acts as the Nucleophile in catalysis. Catalysis depends on residues histidine 181 and glutamate 183. Positions 208–400 (WTPAKIIDDA…LGLPYDMLYR (193 aa)) constitute a GMPS ATP-PPase domain. 235-241 (SGGVDSS) contacts ATP.

In terms of assembly, homodimer.

The catalysed reaction is XMP + L-glutamine + ATP + H2O = GMP + L-glutamate + AMP + diphosphate + 2 H(+). Its pathway is purine metabolism; GMP biosynthesis; GMP from XMP (L-Gln route): step 1/1. Catalyzes the synthesis of GMP from XMP. In Klebsiella pneumoniae (strain 342), this protein is GMP synthase [glutamine-hydrolyzing].